Here is a 201-residue protein sequence, read N- to C-terminus: Probable GTP-binding protein EngB (201 aa).

The EngB-type G domain occupies 21 to 191; sequence AAPQIILAGR…WNLLDVTAIP (171 aa). GTP-binding positions include 29–36, 56–60, 75–78, 142–145, and 168–172; these read GRSNVGKS, GKTRS, DLPG, TKSD, and ICVSS. 2 residues coordinate Mg(2+): serine 36 and threonine 58.

Belongs to the TRAFAC class TrmE-Era-EngA-EngB-Septin-like GTPase superfamily. EngB GTPase family. It depends on Mg(2+) as a cofactor.

Functionally, necessary for normal cell division and for the maintenance of normal septation. In Maridesulfovibrio salexigens (strain ATCC 14822 / DSM 2638 / NCIMB 8403 / VKM B-1763) (Desulfovibrio salexigens), this protein is Probable GTP-binding protein EngB.